Here is a 407-residue protein sequence, read N- to C-terminus: Substance-P receptor (407 aa).

Over methionine 1–glutamine 31 the chain is Extracellular. 2 N-linked (GlcNAc...) asparagine glycosylation sites follow: asparagine 14 and asparagine 18. A helical membrane pass occupies residues isoleucine 32–methionine 54. Residues tryptophan 55–arginine 64 lie on the Cytoplasmic side of the membrane. Residues threonine 65–threonine 86 form a helical membrane-spanning segment. Over valine 87 to lysine 106 the chain is Extracellular. A glycan (N-linked (GlcNAc...) asparagine) is linked at asparagine 89. An intrachain disulfide couples cysteine 105 to cysteine 180. Residues phenylalanine 107–phenylalanine 128 traverse the membrane as a helical segment. Residues aspartate 129–lysine 148 are Cytoplasmic-facing. A helical membrane pass occupies residues valine 149–serine 169. The Extracellular portion of the chain corresponds to threonine 170–lysine 194. Asparagine 189 carries an N-linked (GlcNAc...) asparagine glycan. A helical transmembrane segment spans residues alanine 195 to valine 219. Residues glycine 220–lysine 248 are Cytoplasmic-facing. Residues methionine 249 to leucine 270 traverse the membrane as a helical segment. The Extracellular portion of the chain corresponds to proline 271–isoleucine 283. A helical transmembrane segment spans residues glutamine 284–leucine 308. Over asparagine 309–alanine 407 the chain is Cytoplasmic. The S-palmitoyl cysteine moiety is linked to residue cysteine 322. The interval histidine 365–alanine 407 is disordered. Positions threonine 376 to alanine 407 are enriched in polar residues.

It belongs to the G-protein coupled receptor 1 family. Interacts with ARRB1.

Its subcellular location is the cell membrane. In terms of biological role, this is a receptor for the tachykinin neuropeptide substance P. It is probably associated with G proteins that activate a phosphatidylinositol-calcium second messenger system. This chain is Substance-P receptor (TACR1), found in Meriones unguiculatus (Mongolian jird).